The sequence spans 407 residues: Argininosuccinate synthase (407 aa).

ATP is bound by residues 11 to 19 and Ala39; that span reads AYSGGLDTS. Residues Tyr90 and Ser95 each contribute to the L-citrulline site. Gly120 contacts ATP. The L-aspartate site is built by Thr122, Asn126, and Asp127. Asn126 provides a ligand contact to L-citrulline. Positions 130, 179, 188, 264, and 276 each coordinate L-citrulline.

The protein belongs to the argininosuccinate synthase family. Type 1 subfamily. As to quaternary structure, homotetramer.

It localises to the cytoplasm. It catalyses the reaction L-citrulline + L-aspartate + ATP = 2-(N(omega)-L-arginino)succinate + AMP + diphosphate + H(+). The protein operates within amino-acid biosynthesis; L-arginine biosynthesis; L-arginine from L-ornithine and carbamoyl phosphate: step 2/3. The sequence is that of Argininosuccinate synthase from Roseiflexus sp. (strain RS-1).